We begin with the raw amino-acid sequence, 246 residues long: 33kDa venom protein (246 aa).

Positions 1–20 (MAGKEVIFIMALFIAVESSP) are cleaved as a signal peptide. 7 tandem repeats follow at residues 83–96 (GGAVSESVKQKRET), 97–110 (AESLSGSFDKEKAS), 111–124 (AENLSGSFDQQKSS), 125–138 (VDEKSGSVGQQKGA), 139–152 (VEGQSGSGEQRRET), 153–166 (AESQSGSVDQEKAS), and 167–180 (AENLSGSIDKQKVT). Residues 83-243 (GGAVSESVKQ…SGSVGNDDDI (161 aa)) are 12 X approximate tandem repeats of [AV][DE]X[VL]SGSX[DE]QX[KR]X[ST]. The interval 88–246 (ESVKQKRETA…VGNDDDISVQ (159 aa)) is disordered. Residues 112–123 (ENLSGSFDQQKS) are compositionally biased toward polar residues. Positions 175 to 186 (DKQKVTVEEKSE) are enriched in basic and acidic residues. The stretch at 181 to 187 (VEEKSEP) is one 8; half-length repeat. 4 tandem repeats follow at residues 188 to 201 (AQGQSGSVKQKRKT), 202 to 215 (TENVSGSLDQEKAS), 216 to 229 (AESLSGSFDQQKSS), and 230 to 243 (VDEKSGSVGNDDDI). Positions 217–228 (ESLSGSFDQQKS) are enriched in polar residues.

Expressed by the venom gland.

Its subcellular location is the secreted. In Chelonus sp. nr. curvimaculatus (Parasitic wasp), this protein is 33kDa venom protein.